Consider the following 113-residue polypeptide: Translation initiation factor 1A (113 aa).

The region spanning E12–T87 is the S1-like domain.

Belongs to the eIF-1A family.

Functionally, seems to be required for maximal rate of protein biosynthesis. Enhances ribosome dissociation into subunits and stabilizes the binding of the initiator Met-tRNA(I) to 40 S ribosomal subunits. The chain is Translation initiation factor 1A (eIF1A) from Pyrococcus abyssi (strain GE5 / Orsay).